The chain runs to 232 residues: Sugar fermentation stimulation protein homolog (232 aa).

This sequence belongs to the SfsA family.

The chain is Sugar fermentation stimulation protein homolog from Geobacter sulfurreducens (strain ATCC 51573 / DSM 12127 / PCA).